A 266-amino-acid chain; its full sequence is Protein crossbronx-like (266 aa).

The UBC core domain occupies 15-178 (KQGYHILAEY…VQEQAIASRN (164 aa)).

Belongs to the ubiquitin-conjugating enzyme family. FTS subfamily.

In Drosophila erecta (Fruit fly), this protein is Protein crossbronx-like.